A 416-amino-acid chain; its full sequence is Glutamyl-tRNA reductase (416 aa).

Residues 46-49, S97, 102-104, and Q108 contribute to the substrate site; these read TCNR and DHE. C47 functions as the Nucleophile in the catalytic mechanism. 178–183 contacts NADP(+); the sequence is GAGMAA.

Belongs to the glutamyl-tRNA reductase family. As to quaternary structure, homodimer.

It catalyses the reaction (S)-4-amino-5-oxopentanoate + tRNA(Glu) + NADP(+) = L-glutamyl-tRNA(Glu) + NADPH + H(+). The protein operates within porphyrin-containing compound metabolism; protoporphyrin-IX biosynthesis; 5-aminolevulinate from L-glutamyl-tRNA(Glu): step 1/2. In terms of biological role, catalyzes the NADPH-dependent reduction of glutamyl-tRNA(Glu) to glutamate 1-semialdehyde (GSA). The chain is Glutamyl-tRNA reductase from Aeropyrum pernix (strain ATCC 700893 / DSM 11879 / JCM 9820 / NBRC 100138 / K1).